The sequence spans 106 residues: Flagellar transcriptional regulator FlhD (106 aa).

Belongs to the FlhD family. In terms of assembly, homodimer; disulfide-linked. Forms a heterohexamer composed of two FlhC and four FlhD subunits. Each FlhC binds a FlhD dimer, forming a heterotrimer, and a hexamer assembles by dimerization of two heterotrimers.

It is found in the cytoplasm. Its function is as follows. Functions in complex with FlhC as a master transcriptional regulator that regulates transcription of several flagellar and non-flagellar operons by binding to their promoter region. Activates expression of class 2 flagellar genes, including fliA, which is a flagellum-specific sigma factor that turns on the class 3 genes. Also regulates genes whose products function in a variety of physiological pathways. This Burkholderia mallei (strain SAVP1) protein is Flagellar transcriptional regulator FlhD.